A 168-amino-acid chain; its full sequence is Peroxynitrite isomerase (168 aa).

Residues 25–31 (GTWRGAG) carry the GXWXGXG motif. Position 160 (His-160) interacts with heme b.

It belongs to the nitrobindin family. In terms of assembly, homodimer. Heme b is required as a cofactor.

It catalyses the reaction peroxynitrite = nitrate. It participates in nitrogen metabolism. Heme-binding protein able to scavenge peroxynitrite and to protect free L-tyrosine against peroxynitrite-mediated nitration, by acting as a peroxynitrite isomerase that converts peroxynitrite to nitrate. Therefore, this protein likely plays a role in peroxynitrite sensing and in the detoxification of reactive nitrogen and oxygen species (RNS and ROS, respectively). Is able to bind nitric oxide (NO) in vitro, but may act as a sensor of peroxynitrite levels in vivo. In Nocardia farcinica (strain IFM 10152), this protein is Peroxynitrite isomerase.